The following is a 659-amino-acid chain: Tetratricopeptide repeat protein 30 homolog (659 aa).

7 TPR repeats span residues 3–36 (SQNM…LNGI), 43–76 (RAGL…VPDV), 143–176 (ATVK…GGFN), 178–210 (HIAY…GIRN), 391–424 (CRSA…RAWI), 450–483 (TWRL…NYDD), and 533–566 (CIVN…GSGA).

This sequence belongs to the TTC30/dfy-1/fleer family.

It localises to the cell projection. The protein localises to the cilium. Functionally, required for polyglutamylation of axonemal tubulin in sensory cilia. Plays a role in anterograde intraflagellar transport (IFT), the process by which cilia precursors are transported from the base of the cilium to the site of their incorporation at the tip. The protein is Tetratricopeptide repeat protein 30 homolog of Aedes aegypti (Yellowfever mosquito).